A 354-amino-acid polypeptide reads, in one-letter code: Isocitrate dehydrogenase [NAD] regulatory subunit A, mitochondrial (354 aa).

Residues Ser-95, Asn-97, Arg-101, Arg-111, and Arg-132 each coordinate substrate. Mg(2+)-binding residues include Asp-219, Asp-243, and Asp-247. Residues His-276 to Ile-282 and Asn-289 each bind NADP(+).

The protein belongs to the isocitrate and isopropylmalate dehydrogenases family. In terms of assembly, heterooligomer of catalytic and regulatory subunits. Requires Mg(2+) as cofactor. Mn(2+) serves as cofactor.

It is found in the mitochondrion. It catalyses the reaction D-threo-isocitrate + NAD(+) = 2-oxoglutarate + CO2 + NADH. Performs an essential role in the oxidative function of the citric acid cycle. The protein is Isocitrate dehydrogenase [NAD] regulatory subunit A, mitochondrial (idhA) of Dictyostelium discoideum (Social amoeba).